A 200-amino-acid chain; its full sequence is Imidazole glycerol phosphate synthase subunit HisH (200 aa).

In terms of domain architecture, Glutamine amidotransferase type-1 spans 3-200; the sequence is DLALIDAGGA…LRNFLEMSFP (198 aa). Cys78 (nucleophile) is an active-site residue. Active-site residues include His179 and Glu181.

Heterodimer of HisH and HisF.

It is found in the cytoplasm. The enzyme catalyses 5-[(5-phospho-1-deoxy-D-ribulos-1-ylimino)methylamino]-1-(5-phospho-beta-D-ribosyl)imidazole-4-carboxamide + L-glutamine = D-erythro-1-(imidazol-4-yl)glycerol 3-phosphate + 5-amino-1-(5-phospho-beta-D-ribosyl)imidazole-4-carboxamide + L-glutamate + H(+). It catalyses the reaction L-glutamine + H2O = L-glutamate + NH4(+). It functions in the pathway amino-acid biosynthesis; L-histidine biosynthesis; L-histidine from 5-phospho-alpha-D-ribose 1-diphosphate: step 5/9. In terms of biological role, IGPS catalyzes the conversion of PRFAR and glutamine to IGP, AICAR and glutamate. The HisH subunit catalyzes the hydrolysis of glutamine to glutamate and ammonia as part of the synthesis of IGP and AICAR. The resulting ammonia molecule is channeled to the active site of HisF. The sequence is that of Imidazole glycerol phosphate synthase subunit HisH from Xanthomonas campestris pv. campestris (strain 8004).